The sequence spans 474 residues: Alkylcitrate dehydratase phiI (474 aa).

This sequence belongs to the PrpD family. As to quaternary structure, monomer.

It carries out the reaction (4E,11E)-2-hydroxytrideca-4,11-dien-1,2,3-tricarboxylate + 2 H(+) = [4-(deca-1,8-diyl)-2,5-dioxo-2,5-dihydro-3-furanyl]acetate + 2 H2O. It functions in the pathway secondary metabolite biosynthesis. In terms of biological role, alkylcitrate dehydratasee; part of the gene cluster that mediates the biosynthesis of the antihypercholesterolemic agents phomoidrides which are dimeric anhydrides. Within the pathway, the alkylcitrate synthase (ACS) tstiJ and the alkylcitrate dehydratase (ACDH) tstI produce the decarboxylated monomeric anhydrides by coupling the C12-fatty acyl product from phiA with oxalacetic acid. The pathway begins with the highly reducing polyketide synthase tstA that catalyzes the formation of a C12-fatty acyl-ACP, starting from one acetate and 5 malonate units. The hydrolase tstM is involved in the release of the C12-fatty acyl chain from phiA. The alkylcitrate synthase (ACS) tstJ and the alkylcitrate dehydratase (ACDH) tstI then give rise to decarboxylated monomeric anhydrides by coupling the C12-fatty acyl chain with oxalacetic acid. The cyclase tstC is responsible for the dimerization of the monomeric anhydrides which leads to the production of prephomoidride that contains the characteristic bicyclo[4.3.1]deca-1,6-diene system of phomoidrides. Iterative oxidation catalyzed by the alpha-ketoglutarate-dependent dioxygenase tstK produced then phomoidride A. Finally, the methyltransferase tstE converts phomoidride A to phomoidride B via an acetalization reaction. The phosphatidylethanolamine-binding protein tstB and tstN are not essential for dimerization and their functions have still to be determined. This is Alkylcitrate dehydratase phiI from Talaromyces stipitatus (strain ATCC 10500 / CBS 375.48 / QM 6759 / NRRL 1006) (Penicillium stipitatum).